Reading from the N-terminus, the 57-residue chain is MKVLYGILIIFILCSMFYLSQEVVIGQRCYRSPDCYSACKKLVGKATGKCTNGRCDC.

The N-terminal stretch at 1–20 is a signal peptide; the sequence is MKVLYGILIIFILCSMFYLS. The propeptide at 21 to 22 is removed by a carboxypeptidase; it reads QE. Cystine bridges form between Cys-29/Cys-50, Cys-35/Cys-55, and Cys-39/Cys-57.

The protein belongs to the short scorpion toxin superfamily. Potassium channel inhibitor family. Alpha-KTx 04 subfamily. In terms of tissue distribution, expressed by the venom gland.

Its subcellular location is the secreted. Blocker for small-conductance calcium-activated potassium channels KCa2.2/KCNN2 (Kd=80 nM) and KCa2.3/KCNN3 (Kd=197 nM) and ERG1/Kv11.1/KCNH2 potassium channels (53% inhibition at 5 uM). Has also been shown to inhibit Kv1.1/KCNA1 and Nav1.7/SCN9A with a moderate potency, as well as Kv11.1/KCNH2/ERG1 and Kv1.2/KCNA2 with a low potency. The polypeptide is Potassium channel toxin alpha-KTx 4.2 (Tityus serrulatus (Brazilian scorpion)).